The sequence spans 469 residues: 6-phosphofructo-2-kinase/fructose-2,6-bisphosphatase 4 (469 aa).

Residues 1-249 are 6-phosphofructo-2-kinase; it reads MASPRELTQN…YYLMNIHVTP (249 aa). Residue 46–54 coordinates ATP; sequence GLPARGKTY. Residues Arg-79 and Arg-103 each coordinate beta-D-fructose 6-phosphate. Asp-129 is an active-site residue. Positions 131 and 137 each coordinate beta-D-fructose 6-phosphate. The active site involves Cys-159. 168-173 provides a ligand contact to ATP; that stretch reads NIVQVK. 3 residues coordinate beta-D-fructose 6-phosphate: Lys-173, Arg-194, and Tyr-198. A fructose-2,6-bisphosphatase region spans residues 250–469; the sequence is RSIYLCRHGE…EALVTVPAHQ (220 aa). Arg-256 contributes to the beta-D-fructose 2,6-bisphosphate binding site. His-257 serves as the catalytic Tele-phosphohistidine intermediate. Asn-263, Gly-269, and Arg-306 together coordinate beta-D-fructose 2,6-bisphosphate. Glu-326 functions as the Proton donor/acceptor in the catalytic mechanism. Positions 337, 351, 355, 366, 392, and 396 each coordinate beta-D-fructose 2,6-bisphosphate. Residue 348–351 participates in ATP binding; that stretch reads FALR. ATP is bound by residues 392–396 and Tyr-428; that span reads QAVMR. Residue Thr-444 is modified to Phosphothreonine; by PKC.

The protein in the C-terminal section; belongs to the phosphoglycerate mutase family. As to quaternary structure, homodimer.

The enzyme catalyses beta-D-fructose 2,6-bisphosphate + H2O = beta-D-fructose 6-phosphate + phosphate. It carries out the reaction beta-D-fructose 6-phosphate + ATP = beta-D-fructose 2,6-bisphosphate + ADP + H(+). The most important regulatory mechanism of these opposing activities is by phosphorylation and dephosphorylation of the enzyme. Its function is as follows. Synthesis and degradation of fructose 2,6-bisphosphate. This chain is 6-phosphofructo-2-kinase/fructose-2,6-bisphosphatase 4 (PFKFB4), found in Macaca fascicularis (Crab-eating macaque).